A 280-amino-acid chain; its full sequence is Phosphatidylglycerol--prolipoprotein diacylglyceryl transferase (280 aa).

Helical transmembrane passes span 12–32, 52–72, 86–106, and 115–133; these read FGPF…LIGL, LLPL…VAFE, IWEG…TLIL, and FWDV…QSIG. Arginine 134 is an a 1,2-diacyl-sn-glycero-3-phospho-(1'-sn-glycerol) binding site. 3 consecutive transmembrane segments (helical) span residues 173–193, 203–223, and 246–266; these read PTFL…ILLF, LPAG…RVWI, and IAQL…WWLY.

It belongs to the Lgt family.

Its subcellular location is the cell inner membrane. The enzyme catalyses L-cysteinyl-[prolipoprotein] + a 1,2-diacyl-sn-glycero-3-phospho-(1'-sn-glycerol) = an S-1,2-diacyl-sn-glyceryl-L-cysteinyl-[prolipoprotein] + sn-glycerol 1-phosphate + H(+). Its pathway is protein modification; lipoprotein biosynthesis (diacylglyceryl transfer). Catalyzes the transfer of the diacylglyceryl group from phosphatidylglycerol to the sulfhydryl group of the N-terminal cysteine of a prolipoprotein, the first step in the formation of mature lipoproteins. This is Phosphatidylglycerol--prolipoprotein diacylglyceryl transferase from Synechococcus sp. (strain CC9902).